Consider the following 382-residue polypeptide: Galactokinase (382 aa).

34-37 (EHTD) provides a ligand contact to substrate. Residue 124-130 (GAGLSSS) participates in ATP binding. Positions 130 and 162 each coordinate Mg(2+). Aspartate 174 functions as the Proton acceptor in the catalytic mechanism. Residue tyrosine 223 participates in substrate binding.

Belongs to the GHMP kinase family. GalK subfamily.

It localises to the cytoplasm. The catalysed reaction is alpha-D-galactose + ATP = alpha-D-galactose 1-phosphate + ADP + H(+). The protein operates within carbohydrate metabolism; galactose metabolism. In terms of biological role, catalyzes the transfer of the gamma-phosphate of ATP to D-galactose to form alpha-D-galactose-1-phosphate (Gal-1-P). This chain is Galactokinase, found in Salmonella arizonae (strain ATCC BAA-731 / CDC346-86 / RSK2980).